Reading from the N-terminus, the 217-residue chain is Nascent polypeptide-associated complex subunit alpha-like protein 2 (217 aa).

Residues 1-81 are disordered; the sequence is MSPPPAVVTE…SEKKSRKAML (81 aa). Residues 37 to 60 are compositionally biased toward acidic residues; the sequence is PIVEDVKDDEDDDDDDEEEEDDDA. One can recognise an NAC-A/B domain in the interval 70-135; that stretch reads SRSEKKSRKA…AKIEDLSSQL (66 aa). One can recognise a UBA domain in the interval 178–215; sequence VEARDIDLVMTQAGVSRSKAVKALKSHDGDIVSAIMEL.

Belongs to the NAC-alpha family.

May promote appropriate targeting of ribosome-nascent polypeptide complexes. This is Nascent polypeptide-associated complex subunit alpha-like protein 2 from Arabidopsis thaliana (Mouse-ear cress).